A 384-amino-acid chain; its full sequence is Succinyl-diaminopimelate desuccinylase (384 aa).

Histidine 71 serves as a coordination point for Zn(2+). Aspartate 73 is an active-site residue. Aspartate 104 lines the Zn(2+) pocket. Glutamate 139 acts as the Proton acceptor in catalysis. Residues glutamate 140, glutamate 168, and histidine 357 each coordinate Zn(2+).

This sequence belongs to the peptidase M20A family. DapE subfamily. In terms of assembly, homodimer. Zn(2+) is required as a cofactor. It depends on Co(2+) as a cofactor.

It catalyses the reaction N-succinyl-(2S,6S)-2,6-diaminopimelate + H2O = (2S,6S)-2,6-diaminopimelate + succinate. Its pathway is amino-acid biosynthesis; L-lysine biosynthesis via DAP pathway; LL-2,6-diaminopimelate from (S)-tetrahydrodipicolinate (succinylase route): step 3/3. Catalyzes the hydrolysis of N-succinyl-L,L-diaminopimelic acid (SDAP), forming succinate and LL-2,6-diaminopimelate (DAP), an intermediate involved in the bacterial biosynthesis of lysine and meso-diaminopimelic acid, an essential component of bacterial cell walls. The chain is Succinyl-diaminopimelate desuccinylase from Afipia carboxidovorans (strain ATCC 49405 / DSM 1227 / KCTC 32145 / OM5) (Oligotropha carboxidovorans).